The sequence spans 1984 residues: Vitellogenin receptor Yl (1984 aa).

Positions 1–19 (MCQAEHQVHPSEQRIRVES) are enriched in basic and acidic residues. A disordered region spans residues 1-48 (MCQAEHQVHPSEQRIRVESPKMTASRRGFNLTSQTRAHPSSGGSTSSR). The N-linked (GlcNAc...) asparagine glycan is linked to Asn30. Positions 30–48 (NLTSQTRAHPSSGGSTSSR) are enriched in polar residues. 5 LDL-receptor class A domains span residues 89–125 (RCDA…LDCD), 128–167 (LCRP…LNCP), 183–221 (SCSK…AGCK), 226–263 (TCPG…RGCL), and 265–305 (LCEP…DLCH). Cystine bridges form between Cys90–Cys102, Cys97–Cys115, Cys109–Cys124, Cys129–Cys144, Cys137–Cys157, Cys151–Cys166, Cys184–Cys197, Cys191–Cys210, Cys204–Cys220, Cys227–Cys239, Cys234–Cys253, Cys247–Cys262, Cys266–Cys281, Cys275–Cys294, Cys288–Cys304, Cys310–Cys321, Cys315–Cys331, Cys352–Cys363, Cys359–Cys372, and Cys374–Cys387. One can recognise an EGF-like 1 domain in the interval 306–343 (SKPDCDAKKCALGAKCHMMPASGAECFCPKGFRLAKFE). One can recognise an EGF-like 2; calcium-binding domain in the interval 348–388 (DVDECKEQDDLCSQGCENTSGGYRCVCDAGYLLDKDNRTCR). Asn365, Asn384, and Asn429 each carry an N-linked (GlcNAc...) asparagine glycan. LDL-receptor class B repeat units follow at residues 441 to 485 (SHIY…DWLT), 486 to 528 (QNIY…WPQK), 529 to 572 (GLMF…DMHQ), and 573 to 615 (QRIY…FEDQ). N-linked (GlcNAc...) asparagine glycans are attached at residues Asn666, Asn749, and Asn782. 4 LDL-receptor class B repeats span residues 750 to 792 (GSLI…DHLS), 793 to 836 (RNLY…MPAE), 884 to 925 (QTIF…VHHD), and 934 to 940 (PRIYWTH). N-linked (GlcNAc...) asparagine glycosylation occurs at Asn1022. LDL-receptor class A domains follow at residues 1024–1063 (TCVE…MNCD), 1073–1110 (LCSP…QHCE), 1117–1153 (KCHV…LLCE), 1157–1194 (RCEP…DKCV), and 1197–1233 (SCPP…LNCG). Intrachain disulfides connect Cys1025–Cys1040, Cys1035–Cys1053, Cys1047–Cys1062, Cys1074–Cys1087, Cys1081–Cys1100, Cys1094–Cys1109, Cys1118–Cys1130, Cys1125–Cys1143, Cys1137–Cys1152, Cys1158–Cys1170, Cys1165–Cys1183, Cys1177–Cys1193, Cys1198–Cys1210, Cys1205–Cys1223, and Cys1217–Cys1232. Asn1240 is a glycosylation site (N-linked (GlcNAc...) asparagine). LDL-receptor class A domains are found at residues 1242 to 1280 (SCAE…ADCG) and 1282 to 1319 (VCSI…LSCE). 6 disulfides stabilise this stretch: Cys1243–Cys1257, Cys1250–Cys1270, Cys1264–Cys1279, Cys1283–Cys1296, Cys1290–Cys1309, and Cys1303–Cys1318. Asn1265 is a glycosylation site (N-linked (GlcNAc...) asparagine). N-linked (GlcNAc...) asparagine glycosylation is present at Asn1326. The region spanning 1339 to 1376 (SCRPHLFDCQDGECVDLSRVCNNFPDCTNGHDEGPKCA) is the LDL-receptor class A 13 domain. Intrachain disulfides connect Cys1340–Cys1352, Cys1347–Cys1365, Cys1359–Cys1375, Cys1422–Cys1432, and Cys1428–Cys1441. Positions 1418–1453 (DIDECQEQQPCAQLCENTLGGYQCQCHADFMLRQDR) constitute an EGF-like 3; calcium-binding domain. N-linked (GlcNAc...) asparagine glycans are attached at residues Asn1475 and Asn1490. LDL-receptor class B repeat units follow at residues 1588-1637 (ARIF…DPHQ) and 1638-1687 (QLLY…YENN). Residues 1800–1820 (WLMALFVLAAGSLIAGLGYMY) form a helical membrane-spanning segment. Residues 1821 to 1984 (YQYRQRGHTD…GNDANARFVS (164 aa)) are Cytoplasmic-facing. Ser1926 carries the phosphoserine modification. 2 disordered regions span residues 1927–1951 (KLHA…RQVP) and 1965–1984 (SAGQ…RFVS). Positions 1932–1946 (DGGGAGGDGDGGRGV) are enriched in gly residues.

Belongs to the LDLR family. As to quaternary structure, interacts with osk (isoform A). Ovary.

The protein resides in the cell membrane. It localises to the cytoplasm. The protein localises to the cell cortex. Its subcellular location is the cytoplasmic vesicle. It is found in the clathrin-coated vesicle membrane. The protein resides in the early endosome membrane. It localises to the endosome. The protein localises to the multivesicular body lumen. Functionally, cell surface receptor involved in uptake of vitellogenins (yolk proteins) into developing oocytes by receptor-mediated endocytosis. May also mediate uptake of apolpp/apolipophorins and their incorporation into yolk granules. Along with its ligands, required for maintenance of microtubule plus-end orientation towards the posterior pole of oocytes. Involved in polarized localization of germ plasm components, such as osk mRNA and vas protein, to the oocyte posterior cortex. Receptor-mediated endocytosis of vitellogenin receptor ligands is critical for osk (isoform A) mediated actin reorganization and the anchoring of germ plasm components to the oocyte cortex. The sequence is that of Vitellogenin receptor Yl from Drosophila melanogaster (Fruit fly).